The chain runs to 379 residues: Neutral protease 2 homolog TRV_03208 (379 aa).

The first 19 residues, 1-19 (MKFFTALAAVGALLAPALA), serve as a signal peptide directing secretion. The propeptide occupies 20-187 (LPTPASEEAS…DYFSKSLDKR (168 aa)). Cystine bridges form between C193-C263 and C270-C288. N221 carries an N-linked (GlcNAc...) asparagine glycan. H312 lines the Zn(2+) pocket. E313 is an active-site residue. H316 and D327 together coordinate Zn(2+).

This sequence belongs to the peptidase M35 family. Zn(2+) is required as a cofactor.

It localises to the secreted. It catalyses the reaction Preferential cleavage of bonds with hydrophobic residues in P1'. Also 3-Asn-|-Gln-4 and 8-Gly-|-Ser-9 bonds in insulin B chain.. Functionally, secreted metalloproteinase that allows assimilation of proteinaceous substrates. Shows high activities on basic nuclear substrates such as histone and protamine. May be involved in virulence. The chain is Neutral protease 2 homolog TRV_03208 from Trichophyton verrucosum (strain HKI 0517).